The sequence spans 188 residues: dCTP deaminase (188 aa).

Residues 111–116, 135–137, glutamine 156, tyrosine 170, and glutamine 180 each bind dCTP; these read KSTYAR and TLE. The active-site Proton donor/acceptor is the glutamate 137.

Belongs to the dCTP deaminase family. Homotrimer.

The enzyme catalyses dCTP + H2O + H(+) = dUTP + NH4(+). It participates in pyrimidine metabolism; dUMP biosynthesis; dUMP from dCTP (dUTP route): step 1/2. Catalyzes the deamination of dCTP to dUTP. This is dCTP deaminase from Janthinobacterium sp. (strain Marseille) (Minibacterium massiliensis).